Consider the following 647-residue polypeptide: MPDPATYRPATGSIPVEPGVYRFRDPYGRVIYVGKAKSLRSRLASYFADVANLHPRTRQMVTIAAKVEWTVVNTEVEALQLEYNWIKEFDPRFNIRYRDDKSYPVLAVTLGEEFPRLMVYRGPRRKGVRYFGPYSHAWAIRETLDLLTRVFPARTCSPGVFKRHKQIDRPCLLGYIDKCAAPCVGRVGAEQHSQIVADFCDFLSGKTDRYARDLERKMSAAAEQLDFERAARLRDDLFALKRAMEKQAVVFGDGTDADVVAFAYDELEVAVQVFHVRGGRVRGQRGWIVEKSDDPGDTGEEQLVEQFLAQFYGEQAELDFVADESANPVPREVLVPCLPSNADELASWLSGLRGSRVALRVPRRGDKRALAETVQRNAKEELQQHKLKRASDFNSRSAALQNIQDTLGLSYAPLRIECVDISHVQGTDVVGSLVVFEDGLPRKSDYRHFGIRKAAGNGRSDDVASIAEVTRRRFLQHLHDQNDTNLLSPEGKSHRFAYPPNLYVVDGGAPQVNAASTVLEELGIIDVAVIGLAKRLEEVWVPFEPYPVIMPRNSEALFLLQRVRDEAHRFAITYHRSKRSKRMTASALDSVPGLGAHRRKALVTHFGSIARLKDATVEQITAVPGIGVATATAVLEALRPDSSEASE.

A GIY-YIG domain is found at 16–95 (VEPGVYRFRD…IKEFDPRFNI (80 aa)). The UVR domain occupies 208 to 243 (DRYARDLERKMSAAAEQLDFERAARLRDDLFALKRA).

Belongs to the UvrC family. As to quaternary structure, interacts with UvrB in an incision complex.

The protein localises to the cytoplasm. In terms of biological role, the UvrABC repair system catalyzes the recognition and processing of DNA lesions. UvrC both incises the 5' and 3' sides of the lesion. The N-terminal half is responsible for the 3' incision and the C-terminal half is responsible for the 5' incision. The protein is UvrABC system protein C of Mycobacterium leprae (strain Br4923).